The chain runs to 568 residues: MARVFRRECHRVLDSERTTIQGADGMLMVPQLAIAGVNKQERGDFGVALSEVLAVWKYFLLDKLQLSHKDIPLPQSYDLIRKEYDCFLKRTNTVDLIDVFSMFKELRLNEDPEEPLTTMQMFQFLFGENESSEKPSQPVCPATPSCKAADCSPQIQRVVRRVFCSYLDLLVNSKNDLALTYTLDNPNRSLGHTAFTDLRHAACDSASSLFLTVTSFVRAIQLGGKGYAPPESHPLRKHVKGLSEFLNFVDQCQDILGETPNPREAGCKLVSSIRAALVKGRSAGDPVYLAAEESTKSLKERIGQIHAMHTQSTVGTGISPARPKAYAINHATAYGGRETVKVLMALLDEEALALPCRNKAELLSEDHAALNGSTGACLLALYKSPEAPTGSSPKSLRNRVLSQQEHIKSKVVRPTIRSQFACTYKEEELPLNRVLEFPSTSQIPTCVHPAPKKASSESDNGMDNRFKEATNLRCEGPGQSALGEHSGNAWNQTGGKSTQPEPLRRATGTLKRKLANRECTEQGREENQPPQKRPPAKAATGGPGKRNNKAVSKKLIAGQGKLTGFFRL.

Residues 442 to 555 form a disordered region; it reads QIPTCVHPAP…RNNKAVSKKL (114 aa). Polar residues predominate over residues 488 to 500; that stretch reads NAWNQTGGKSTQP. Residues 515 to 527 show a composition bias toward basic and acidic residues; the sequence is ANRECTEQGREEN.

Belongs to the PARI family.

Its subcellular location is the cytoplasm. The protein localises to the nucleus. Required to suppress inappropriate homologous recombination, thereby playing a central role DNA repair and in the maintenance of genomic stability. In Danio rerio (Zebrafish), this protein is PCNA-interacting partner (parpbp).